The primary structure comprises 221 residues: GTP-binding nuclear protein Ran-A1 (221 aa).

A Small GTPase Ran-type domain is found at 10-174 (DYPSFKLVIV…LYLARKLAGD (165 aa)). Residue 21 to 28 (DGGTGKTT) participates in GTP binding. The segment at 40-48 (KKYEPTIGV) is switch-I. GTP contacts are provided by residues G71, 125–128 (NKVD), and 153–155 (SAK). The interval 71–87 (GQEKFGGLRDGYYIHGQ) is switch-II. Residues 199–208 (QHEAELAAAA) are compositionally biased toward low complexity. The disordered stretch occupies residues 199–221 (QHEAELAAAASQPLPDDDDETFD).

The protein belongs to the small GTPase superfamily. Ran family. As to quaternary structure, found in a nuclear export complex with RanGTP, exportin and pre-miRNA.

Its subcellular location is the nucleus. Its function is as follows. GTP-binding protein involved in nucleocytoplasmic transport. Required for the import of protein into the nucleus and also for RNA export. Involved in chromatin condensation and control of cell cycle. The sequence is that of GTP-binding nuclear protein Ran-A1 (RAN-A1) from Nicotiana tabacum (Common tobacco).